Here is a 160-residue protein sequence, read N- to C-terminus: NADH-quinone oxidoreductase subunit B (160 aa).

[4Fe-4S] cluster-binding residues include Cys-37, Cys-38, Cys-102, and Cys-132.

The protein belongs to the complex I 20 kDa subunit family. As to quaternary structure, NDH-1 is composed of 14 different subunits. Subunits NuoB, C, D, E, F, and G constitute the peripheral sector of the complex. The cofactor is [4Fe-4S] cluster.

It is found in the cell inner membrane. It carries out the reaction a quinone + NADH + 5 H(+)(in) = a quinol + NAD(+) + 4 H(+)(out). In terms of biological role, NDH-1 shuttles electrons from NADH, via FMN and iron-sulfur (Fe-S) centers, to quinones in the respiratory chain. Couples the redox reaction to proton translocation (for every two electrons transferred, four hydrogen ions are translocated across the cytoplasmic membrane), and thus conserves the redox energy in a proton gradient. The sequence is that of NADH-quinone oxidoreductase subunit B from Cupriavidus metallidurans (strain ATCC 43123 / DSM 2839 / NBRC 102507 / CH34) (Ralstonia metallidurans).